The following is a 138-amino-acid chain: Thyrotropin subunit beta (138 aa).

The N-terminal stretch at 1-20 is a signal peptide; sequence MTALFLMSMLFGLTCGQAMS. Intrachain disulfides connect C22/C72, C36/C87, C39/C125, C47/C103, C51/C105, and C108/C115. A glycan (N-linked (GlcNAc...) asparagine) is linked at N43. A propeptide spanning residues 133 to 138 is cleaved from the precursor; sequence LVGFSV.

Belongs to the glycoprotein hormones subunit beta family. Heterodimer of a common alpha chain and a unique beta chain which confers biological specificity to thyrotropin, lutropin, follitropin and gonadotropin.

The protein localises to the secreted. Functionally, indispensable for the control of thyroid structure and metabolism. The chain is Thyrotropin subunit beta (TSHB) from Homo sapiens (Human).